Reading from the N-terminus, the 350-residue chain is Kelch domain-containing protein 8A (350 aa).

Kelch repeat units lie at residues Met1–Gly31, Gln32–Lys79, Ile81–Tyr127, Arg128–Ser175, Lys176–Asn222, Leu224–Gly278, and Arg279–Asn326.

The sequence is that of Kelch domain-containing protein 8A (KLHDC8A) from Homo sapiens (Human).